We begin with the raw amino-acid sequence, 288 residues long: ATP synthase gamma chain (288 aa).

This sequence belongs to the ATPase gamma chain family. As to quaternary structure, F-type ATPases have 2 components, CF(1) - the catalytic core - and CF(0) - the membrane proton channel. CF(1) has five subunits: alpha(3), beta(3), gamma(1), delta(1), epsilon(1). CF(0) has three main subunits: a, b and c.

It localises to the cell membrane. Functionally, produces ATP from ADP in the presence of a proton gradient across the membrane. The gamma chain is believed to be important in regulating ATPase activity and the flow of protons through the CF(0) complex. In Staphylococcus saprophyticus subsp. saprophyticus (strain ATCC 15305 / DSM 20229 / NCIMB 8711 / NCTC 7292 / S-41), this protein is ATP synthase gamma chain.